The chain runs to 81 residues: Short neurotoxin 1 (81 aa).

The first 21 residues, 1 to 21, serve as a signal peptide directing secretion; the sequence is MKTLLLTLVVVTIVFLDLGYT. Cystine bridges form between Cys24–Cys43, Cys38–Cys60, Cys62–Cys73, and Cys74–Cys79.

Belongs to the three-finger toxin family. Short-chain subfamily. Type I alpha-neurotoxin sub-subfamily. As to expression, expressed by the venom gland.

The protein resides in the secreted. Its function is as follows. Binds to muscle nicotinic acetylcholine receptor (nAChR) and inhibit acetylcholine from binding to the receptor, thereby impairing neuromuscular transmission. The protein is Short neurotoxin 1 of Notechis scutatus scutatus (Mainland tiger snake).